The primary structure comprises 113 residues: Antimicrobial peptide microplusin (113 aa).

Residues 1-19 form the signal peptide; it reads MKSLLVLALLAFGAVLVSA. 3 disulfide bridges follow: cysteine 25–cysteine 71, cysteine 38–cysteine 99, and cysteine 60–cysteine 65.

It is found in the secreted. Functionally, has bacteriostatic activity against Gram-positive bacteria, but not against Gram-negative bacteria. Has fungistatic activity against some but not all fungi. Binds and sequesters copper and iron ions. Copper-chelating activity is crucial for antimicrobial activity against M.luteus. This chain is Antimicrobial peptide microplusin, found in Argas monolakensis (Mono lake bird tick).